Reading from the N-terminus, the 314-residue chain is 2,3-dihydroxyphenylpropionate/2,3-dihydroxicinnamic acid 1,2-dioxygenase (314 aa).

The active-site Proton donor is His-115. Residue His-179 is the Proton acceptor of the active site.

It belongs to the LigB/MhpB extradiol dioxygenase family. As to quaternary structure, homotetramer. Fe(2+) is required as a cofactor.

The catalysed reaction is 3-(2,3-dihydroxyphenyl)propanoate + O2 = (2Z,4E)-2-hydroxy-6-oxonona-2,4-dienedioate + H(+). It catalyses the reaction (2E)-3-(2,3-dihydroxyphenyl)prop-2-enoate + O2 = (2Z,4E,7E)-2-hydroxy-6-oxonona-2,4,7-trienedioate + H(+). Its pathway is aromatic compound metabolism; 3-phenylpropanoate degradation. Catalyzes the non-heme iron(II)-dependent oxidative cleavage of 2,3-dihydroxyphenylpropionic acid and 2,3-dihydroxicinnamic acid into 2-hydroxy-6-ketononadienedioate and 2-hydroxy-6-ketononatrienedioate, respectively. In Escherichia coli (strain 55989 / EAEC), this protein is 2,3-dihydroxyphenylpropionate/2,3-dihydroxicinnamic acid 1,2-dioxygenase.